The primary structure comprises 236 residues: 2,3,4,5-tetrahydropyridine-2,6-dicarboxylate N-acetyltransferase (236 aa).

It belongs to the transferase hexapeptide repeat family. DapH subfamily.

It carries out the reaction (S)-2,3,4,5-tetrahydrodipicolinate + acetyl-CoA + H2O = L-2-acetamido-6-oxoheptanedioate + CoA. It participates in amino-acid biosynthesis; L-lysine biosynthesis via DAP pathway; LL-2,6-diaminopimelate from (S)-tetrahydrodipicolinate (acetylase route): step 1/3. Functionally, catalyzes the transfer of an acetyl group from acetyl-CoA to tetrahydrodipicolinate. The polypeptide is 2,3,4,5-tetrahydropyridine-2,6-dicarboxylate N-acetyltransferase (Pediococcus pentosaceus (strain ATCC 25745 / CCUG 21536 / LMG 10740 / 183-1w)).